We begin with the raw amino-acid sequence, 522 residues long: 2-isopropylmalate synthase (522 aa).

The Pyruvate carboxyltransferase domain occupies 5 to 267 (VIIFDTTLRD…ETGINAKEIH (263 aa)). Mn(2+) contacts are provided by D14, H202, H204, and N238. Residues 392–522 (QLQQLVVQSD…MHKNRELGGV (131 aa)) are regulatory domain.

The protein belongs to the alpha-IPM synthase/homocitrate synthase family. LeuA type 1 subfamily. In terms of assembly, homodimer. Mn(2+) serves as cofactor.

The protein localises to the cytoplasm. It carries out the reaction 3-methyl-2-oxobutanoate + acetyl-CoA + H2O = (2S)-2-isopropylmalate + CoA + H(+). It functions in the pathway amino-acid biosynthesis; L-leucine biosynthesis; L-leucine from 3-methyl-2-oxobutanoate: step 1/4. In terms of biological role, catalyzes the condensation of the acetyl group of acetyl-CoA with 3-methyl-2-oxobutanoate (2-ketoisovalerate) to form 3-carboxy-3-hydroxy-4-methylpentanoate (2-isopropylmalate). In Shewanella sp. (strain MR-7), this protein is 2-isopropylmalate synthase.